The primary structure comprises 432 residues: 2-oxoglutarate-dependent dioxygenase AOP2 (432 aa).

The region spanning 281–378 (SGDDVEANDD…RYTAAIFTCP (98 aa)) is the Fe2OG dioxygenase domain. The Fe cation site is built by histidine 301, aspartate 303, and histidine 358. Arginine 369 is a binding site for 2-oxoglutarate.

It belongs to the iron/ascorbate-dependent oxidoreductase family. It depends on Fe(2+) as a cofactor.

Functionally, 2-oxoglutarate-dependent dioxygenase involved in glucosinolates biosynthesis. Catalyzes the conversion of methylsulfinylalkyl glucosinolates to alkenyl glucosinolates. This Arabidopsis thaliana (Mouse-ear cress) protein is 2-oxoglutarate-dependent dioxygenase AOP2 (AOP2).